Reading from the N-terminus, the 1040-residue chain is Multidrug resistance protein MdtB (1040 aa).

12 helical membrane passes run 16-36 (FIMRPVATTLLMVAILLAGII), 342-362 (DTQFELMLAIALVVMIIYLFL), 369-389 (IIPGVAVPLSLVGTFAVMVFL), 396-416 (LTLMALTIATGFVVDDAIVVI), 440-460 (IGFTIISLTFSLIAVLIPLLF), 472-492 (FAVTLAVAILISAVVSLTLTP), 537-557 (WLTLGVALSTLALSIILWVFI), 863-883 (LGSTVWLVVAAVVAMYIVLGV), 888-908 (FIHPITILSTLPTAGVGALLA), 911-931 (LAGSELDVIAIIGIILLIGIV), 968-988 (ILMTTLAALLGALPLMLSTGV), and 998-1018 (IGMVGGLMLSQVLTLFTTPVI).

The protein belongs to the resistance-nodulation-cell division (RND) (TC 2.A.6) family. MdtB subfamily. Part of a tripartite efflux system composed of MdtA, MdtB and MdtC. MdtB forms a heteromultimer with MdtC.

The protein resides in the cell inner membrane. In Klebsiella pneumoniae (strain 342), this protein is Multidrug resistance protein MdtB.